The sequence spans 338 residues: Aspartate-semialdehyde dehydrogenase (338 aa).

Residues 13–16 (SGAV) and 41–42 (RS) contribute to the NADP(+) site. Arg101 is a phosphate binding site. The active-site Acyl-thioester intermediate is the Cys132. Substrate is bound at residue Gln159. Residue 162–163 (SG) participates in NADP(+) binding. Lys216 serves as a coordination point for phosphate. Position 238 (Arg238) interacts with substrate. Catalysis depends on His245, which acts as the Proton acceptor. Residue Asn317 participates in NADP(+) binding.

It belongs to the aspartate-semialdehyde dehydrogenase family. In terms of assembly, homodimer.

The enzyme catalyses L-aspartate 4-semialdehyde + phosphate + NADP(+) = 4-phospho-L-aspartate + NADPH + H(+). Its pathway is amino-acid biosynthesis; L-lysine biosynthesis via DAP pathway; (S)-tetrahydrodipicolinate from L-aspartate: step 2/4. The protein operates within amino-acid biosynthesis; L-methionine biosynthesis via de novo pathway; L-homoserine from L-aspartate: step 2/3. It functions in the pathway amino-acid biosynthesis; L-threonine biosynthesis; L-threonine from L-aspartate: step 2/5. Catalyzes the NADPH-dependent formation of L-aspartate-semialdehyde (L-ASA) by the reductive dephosphorylation of L-aspartyl-4-phosphate. This Shewanella violacea (strain JCM 10179 / CIP 106290 / LMG 19151 / DSS12) protein is Aspartate-semialdehyde dehydrogenase.